The sequence spans 338 residues: MSTLRLLISDSYDPWFNLAVEECIFRQMPATQRVLFLWRNADTVVIGRAQNPWKECNTRRMEEDNVRLARRSSGGGAVFHDLGNTCFTFMAGKPEYDKTISTSIVLNALNALGVSAEASGRNDLVVKTAEGDRKVSGSAYRETKDRGFHHGTLLLNADLSRLANYLNPDKKKLAAKGITSVRSRVTNLTELLPGITHEQVCEAITEAFFAHYGERVEAEIISPDKTPDLPNFAETFARQSSWEWNFGQAPAFSHLLDERFTWGGVELHFDVEKGHITRAQVFTDSLNPAPLEALAGRLQGCLYRADMLQQECEALLVDFPEQEKELRELSAWMAGAVR.

Residues 29–216 enclose the BPL/LPL catalytic domain; that stretch reads PATQRVLFLW…AFFAHYGERV (188 aa). Residues arginine 71, 76 to 79, and lysine 134 contribute to the ATP site; that span reads GAVF. Lysine 134 contributes to the (R)-lipoate binding site.

This sequence belongs to the LplA family. Monomer.

It is found in the cytoplasm. The enzyme catalyses L-lysyl-[lipoyl-carrier protein] + (R)-lipoate + ATP = N(6)-[(R)-lipoyl]-L-lysyl-[lipoyl-carrier protein] + AMP + diphosphate + H(+). Its pathway is protein modification; protein lipoylation via exogenous pathway; protein N(6)-(lipoyl)lysine from lipoate: step 1/2. It participates in protein modification; protein lipoylation via exogenous pathway; protein N(6)-(lipoyl)lysine from lipoate: step 2/2. In terms of biological role, catalyzes both the ATP-dependent activation of exogenously supplied lipoate to lipoyl-AMP and the transfer of the activated lipoyl onto the lipoyl domains of lipoate-dependent enzymes. The protein is Lipoate-protein ligase A of Escherichia fergusonii (strain ATCC 35469 / DSM 13698 / CCUG 18766 / IAM 14443 / JCM 21226 / LMG 7866 / NBRC 102419 / NCTC 12128 / CDC 0568-73).